A 349-amino-acid polypeptide reads, in one-letter code: Alanine racemase (349 aa).

Residue Lys35 is the Proton acceptor; specific for D-alanine of the active site. Residue Lys35 is modified to N6-(pyridoxal phosphate)lysine. Arg130 is a binding site for substrate. Tyr244 serves as the catalytic Proton acceptor; specific for L-alanine. Met292 serves as a coordination point for substrate.

The protein belongs to the alanine racemase family. Requires pyridoxal 5'-phosphate as cofactor.

It catalyses the reaction L-alanine = D-alanine. The protein operates within amino-acid biosynthesis; D-alanine biosynthesis; D-alanine from L-alanine: step 1/1. In terms of biological role, catalyzes the interconversion of L-alanine and D-alanine. May also act on other amino acids. This is Alanine racemase (alr) from Cereibacter sphaeroides (strain ATCC 17023 / DSM 158 / JCM 6121 / CCUG 31486 / LMG 2827 / NBRC 12203 / NCIMB 8253 / ATH 2.4.1.) (Rhodobacter sphaeroides).